We begin with the raw amino-acid sequence, 168 residues long: Crossover junction endodeoxyribonuclease RuvC (168 aa).

Residues Asp8, Glu68, and Asp140 contribute to the active site. Mg(2+)-binding residues include Asp8, Glu68, and Asp140.

The protein belongs to the RuvC family. Homodimer which binds Holliday junction (HJ) DNA. The HJ becomes 2-fold symmetrical on binding to RuvC with unstacked arms; it has a different conformation from HJ DNA in complex with RuvA. In the full resolvosome a probable DNA-RuvA(4)-RuvB(12)-RuvC(2) complex forms which resolves the HJ. Mg(2+) serves as cofactor.

It is found in the cytoplasm. It catalyses the reaction Endonucleolytic cleavage at a junction such as a reciprocal single-stranded crossover between two homologous DNA duplexes (Holliday junction).. Its function is as follows. The RuvA-RuvB-RuvC complex processes Holliday junction (HJ) DNA during genetic recombination and DNA repair. Endonuclease that resolves HJ intermediates. Cleaves cruciform DNA by making single-stranded nicks across the HJ at symmetrical positions within the homologous arms, yielding a 5'-phosphate and a 3'-hydroxyl group; requires a central core of homology in the junction. The consensus cleavage sequence is 5'-(A/T)TT(C/G)-3'. Cleavage occurs on the 3'-side of the TT dinucleotide at the point of strand exchange. HJ branch migration catalyzed by RuvA-RuvB allows RuvC to scan DNA until it finds its consensus sequence, where it cleaves and resolves the cruciform DNA. The protein is Crossover junction endodeoxyribonuclease RuvC of Lawsonia intracellularis (strain PHE/MN1-00).